The primary structure comprises 317 residues: Lipoyl synthase (317 aa).

[4Fe-4S] cluster is bound by residues Cys-55, Cys-60, Cys-66, Cys-81, Cys-85, Cys-88, and Ser-292. The 215-residue stretch at 67-281 folds into the Radical SAM core domain; sequence WEDREATFLI…ERYATEIGFA (215 aa).

It belongs to the radical SAM superfamily. Lipoyl synthase family. The cofactor is [4Fe-4S] cluster.

It localises to the cytoplasm. It carries out the reaction [[Fe-S] cluster scaffold protein carrying a second [4Fe-4S](2+) cluster] + N(6)-octanoyl-L-lysyl-[protein] + 2 oxidized [2Fe-2S]-[ferredoxin] + 2 S-adenosyl-L-methionine + 4 H(+) = [[Fe-S] cluster scaffold protein] + N(6)-[(R)-dihydrolipoyl]-L-lysyl-[protein] + 4 Fe(3+) + 2 hydrogen sulfide + 2 5'-deoxyadenosine + 2 L-methionine + 2 reduced [2Fe-2S]-[ferredoxin]. It functions in the pathway protein modification; protein lipoylation via endogenous pathway; protein N(6)-(lipoyl)lysine from octanoyl-[acyl-carrier-protein]: step 2/2. Catalyzes the radical-mediated insertion of two sulfur atoms into the C-6 and C-8 positions of the octanoyl moiety bound to the lipoyl domains of lipoate-dependent enzymes, thereby converting the octanoylated domains into lipoylated derivatives. This is Lipoyl synthase from Mycolicibacterium gilvum (strain PYR-GCK) (Mycobacterium gilvum (strain PYR-GCK)).